The primary structure comprises 209 residues: Orotate phosphoribosyltransferase (209 aa).

Residues R96, K100, H102, and 122–130 (EDLISTGKS) contribute to the 5-phospho-alpha-D-ribose 1-diphosphate site. S126 contributes to the orotate binding site.

Belongs to the purine/pyrimidine phosphoribosyltransferase family. PyrE subfamily. As to quaternary structure, homodimer. Mg(2+) serves as cofactor.

It carries out the reaction orotidine 5'-phosphate + diphosphate = orotate + 5-phospho-alpha-D-ribose 1-diphosphate. It participates in pyrimidine metabolism; UMP biosynthesis via de novo pathway; UMP from orotate: step 1/2. Functionally, catalyzes the transfer of a ribosyl phosphate group from 5-phosphoribose 1-diphosphate to orotate, leading to the formation of orotidine monophosphate (OMP). This is Orotate phosphoribosyltransferase from Coxiella burnetii (strain RSA 493 / Nine Mile phase I).